Reading from the N-terminus, the 362-residue chain is Serine/threonine-protein kinase SRK2D (362 aa).

A Protein kinase domain is found at 23 to 279 (YDFVKDIGSG…IPEITSDKWF (257 aa)). Residues 29–37 (IGSGNFGVA) and lysine 52 each bind ATP. The Proton acceptor role is filled by aspartate 142.

It belongs to the protein kinase superfamily. Ser/Thr protein kinase family. Interacts with ABI1. Interacts with I-2, TOPP1 and TOPP2. Interacts with FREE1 (via C-terminus). As to expression, expressed in seeds, seedlings, roots (especially in tips), stems, leaves, shoots, flowers and siliques.

It catalyses the reaction L-seryl-[protein] + ATP = O-phospho-L-seryl-[protein] + ADP + H(+). It carries out the reaction L-threonyl-[protein] + ATP = O-phospho-L-threonyl-[protein] + ADP + H(+). Its function is as follows. Together with SRK2I, key component and activator of the abscisic acid (ABA) signaling pathway that regulates numerous ABA responses, such as seed germination, Pro accumulation, root growth inhibition, dormancy and seedling growth, and, to a lesser extent, stomatal closure. In response to ABA, phosphorylates the ESCRT-I complex component FREE1, which is required for ABA-induced FREE1 nuclear import. The protein is Serine/threonine-protein kinase SRK2D (SRK2D) of Arabidopsis thaliana (Mouse-ear cress).